A 98-amino-acid chain; its full sequence is Small ribosomal subunit protein bS20 (98 aa).

It belongs to the bacterial ribosomal protein bS20 family.

Binds directly to 16S ribosomal RNA. The protein is Small ribosomal subunit protein bS20 of Parasynechococcus marenigrum (strain WH8102).